The following is a 406-amino-acid chain: Dual-specificity RNA methyltransferase RlmN (406 aa).

The active-site Proton acceptor is the Glu119. The 246-residue stretch at 125–370 (DKGRGTLCVS…AMVRRTRGDD (246 aa)) folds into the Radical SAM core domain. An intrachain disulfide couples Cys132 to Cys375. Cys139, Cys143, and Cys146 together coordinate [4Fe-4S] cluster. S-adenosyl-L-methionine-binding positions include 192 to 193 (GE), Ser224, 246 to 248 (SLH), and Asn332. The active-site S-methylcysteine intermediate is Cys375.

This sequence belongs to the radical SAM superfamily. RlmN family. The cofactor is [4Fe-4S] cluster.

It is found in the cytoplasm. It catalyses the reaction adenosine(2503) in 23S rRNA + 2 reduced [2Fe-2S]-[ferredoxin] + 2 S-adenosyl-L-methionine = 2-methyladenosine(2503) in 23S rRNA + 5'-deoxyadenosine + L-methionine + 2 oxidized [2Fe-2S]-[ferredoxin] + S-adenosyl-L-homocysteine. It carries out the reaction adenosine(37) in tRNA + 2 reduced [2Fe-2S]-[ferredoxin] + 2 S-adenosyl-L-methionine = 2-methyladenosine(37) in tRNA + 5'-deoxyadenosine + L-methionine + 2 oxidized [2Fe-2S]-[ferredoxin] + S-adenosyl-L-homocysteine. Functionally, specifically methylates position 2 of adenine 2503 in 23S rRNA and position 2 of adenine 37 in tRNAs. m2A2503 modification seems to play a crucial role in the proofreading step occurring at the peptidyl transferase center and thus would serve to optimize ribosomal fidelity. The chain is Dual-specificity RNA methyltransferase RlmN from Xylella fastidiosa (strain 9a5c).